Reading from the N-terminus, the 997-residue chain is Glutamate [NMDA] receptor subunit 1 (997 aa).

The N-terminal stretch at 1–26 is a signal peptide; that stretch reads MAVAGFVFCWPLLGLTIVLLVAPIDA. The Extracellular portion of the chain corresponds to 27 to 573; sequence AQRHTASDNP…TLVSFLQPFS (547 aa). N-linked (GlcNAc...) asparagine glycosylation is found at asparagine 258, asparagine 314, asparagine 345, asparagine 397, asparagine 454, asparagine 481, and asparagine 501. Glycine is bound by residues 530-532 and arginine 537; that span reads PLT. The helical transmembrane segment at 574-594 threads the bilayer; the sequence is NTLWILVMVSVHVVALVLYLL. Topologically, residues 595–651 are cytoplasmic; the sequence is DRFSPFGRFKLSHSDSNEEKALNLSSAVWFAWGVLLNSGIGEGTPRSFSARVLGMVW. Residues 652–672 traverse the membrane as a helical segment; the sequence is AGFAMIIVASYTANLAAFLVL. The Extracellular segment spans residues 673 to 831; it reads ERPKTKLSGI…KTPNTLGLKN (159 aa). N-linked (GlcNAc...) asparagine glycosylation is present at asparagine 693. Residues serine 703 and aspartate 747 each contribute to the glycine site. Residues 832 to 852 traverse the membrane as a helical segment; it reads MAGVFILVGVGIAGGVGLIII. Topologically, residues 853-997 are cytoplasmic; sequence EVIYKKHQVK…YTSDVSHLVV (145 aa). A disordered region spans residues 970-997; sequence LGKTRPQQSVLPPRYSPGYTSDVSHLVV. Polar residues predominate over residues 987–997; the sequence is GYTSDVSHLVV.

Belongs to the glutamate-gated ion channel (TC 1.A.10.1) family. In terms of assembly, forms a heteromeric NMDA channel with Nmdar2.

It localises to the cell membrane. It is found in the postsynaptic cell membrane. The protein localises to the postsynaptic density. In terms of biological role, NMDA receptor subtype of glutamate-gated ion channels with high calcium permeability and voltage-dependent sensitivity to magnesium. Mediated by glycine. This protein plays a key role in synaptic plasticity, synaptogenesis, excitotoxicity, memory acquisition and learning. It mediates neuronal functions in glutamate neurotransmission. Is involved in the cell surface targeting of NMDA receptors. Plays a role in associative learning and in long-term memory consolidation. This is Glutamate [NMDA] receptor subunit 1 from Drosophila yakuba (Fruit fly).